A 157-amino-acid polypeptide reads, in one-letter code: Ribosomal RNA large subunit methyltransferase H (157 aa).

S-adenosyl-L-methionine is bound by residues leucine 73, glycine 105, and 124–129; that span reads MSKMTF.

This sequence belongs to the RNA methyltransferase RlmH family. As to quaternary structure, homodimer.

It localises to the cytoplasm. The enzyme catalyses pseudouridine(1915) in 23S rRNA + S-adenosyl-L-methionine = N(3)-methylpseudouridine(1915) in 23S rRNA + S-adenosyl-L-homocysteine + H(+). Its function is as follows. Specifically methylates the pseudouridine at position 1915 (m3Psi1915) in 23S rRNA. This is Ribosomal RNA large subunit methyltransferase H from Bacteroides thetaiotaomicron (strain ATCC 29148 / DSM 2079 / JCM 5827 / CCUG 10774 / NCTC 10582 / VPI-5482 / E50).